The primary structure comprises 366 residues: tRNA/tmRNA (uracil-C(5))-methyltransferase (366 aa).

Residues Gln190, Tyr218, Asn223, Glu239, and Asp299 each coordinate S-adenosyl-L-methionine. Residue Cys324 is the Nucleophile of the active site. The Proton acceptor role is filled by Glu358.

Belongs to the class I-like SAM-binding methyltransferase superfamily. RNA M5U methyltransferase family. TrmA subfamily.

The enzyme catalyses uridine(54) in tRNA + S-adenosyl-L-methionine = 5-methyluridine(54) in tRNA + S-adenosyl-L-homocysteine + H(+). It catalyses the reaction uridine(341) in tmRNA + S-adenosyl-L-methionine = 5-methyluridine(341) in tmRNA + S-adenosyl-L-homocysteine + H(+). Dual-specificity methyltransferase that catalyzes the formation of 5-methyluridine at position 54 (m5U54) in all tRNAs, and that of position 341 (m5U341) in tmRNA (transfer-mRNA). The chain is tRNA/tmRNA (uracil-C(5))-methyltransferase from Escherichia coli O81 (strain ED1a).